Here is a 198-residue protein sequence, read N- to C-terminus: MVITLPKLKYALNALSPHISEETLNFHYNKHHAGYVNKLNTLIKDTPFAEKSLLDIVKESSGAIFNNAAQIWNHTFYWDSMGPDCGGEPHGGIKEKIQEDFGSFNNFKEQFSNILCGHFGSGWGWLALNNNNKLVILQTHDAGNPIKDNTGIPILTCDIWEHAYCIDYRNDRASYVKAWWNLVNWNFANENLKKAMQK.

Residues H27, H74, D158, and H162 each coordinate Fe cation.

This sequence belongs to the iron/manganese superoxide dismutase family. Homodimer. The cofactor is Fe cation.

Its subcellular location is the cytoplasm. The enzyme catalyses 2 superoxide + 2 H(+) = H2O2 + O2. Functionally, destroys superoxide anion radicals which are normally produced within the cells and which are toxic to biological systems. In Plasmodium malariae, this protein is Superoxide dismutase [Fe] (SODB).